The chain runs to 956 residues: DNA polymerase I (956 aa).

The region spanning 209 to 296 is the 5'-3' exonuclease domain; that stretch reads VTVRQWVDYR…VTDLPLDIEF (88 aa).

Belongs to the DNA polymerase type-A family. In terms of assembly, single-chain monomer with multiple functions.

It catalyses the reaction DNA(n) + a 2'-deoxyribonucleoside 5'-triphosphate = DNA(n+1) + diphosphate. A DNA polymerase, required for DNA repair after DNA damage induced by ionizing radiation (IR); this is not the major DNA polymerase. Following severe irradiation (7 kGy of gamma irradiation) genomic DNA is fragmented. DNA is progressively degraded for the first 1.5 hours after IR, in a step promoted by RecA and counterbalanced by DNA Pol I and Pol III, followed by massive DNA synthesis and genome reassembly in the next hour. Optimal priming of DNA synthesis requires both RecA and RadA, Pol III initiates DNA synthesis while both Pol I and Pol III are required for its continuation. May also have 5'-3' exonuclease activity. The protein is DNA polymerase I (polA) of Deinococcus radiodurans (strain ATCC 13939 / DSM 20539 / JCM 16871 / CCUG 27074 / LMG 4051 / NBRC 15346 / NCIMB 9279 / VKM B-1422 / R1).